Reading from the N-terminus, the 232-residue chain is Orotidine 5'-phosphate decarboxylase (232 aa).

Substrate-binding positions include Asp-11, Lys-33, 61–70 (DMKLFDIGAT), Thr-116, Arg-179, Gln-188, Gly-208, and Arg-209. The active-site Proton donor is Lys-63.

It belongs to the OMP decarboxylase family. Type 1 subfamily. As to quaternary structure, homodimer.

It catalyses the reaction orotidine 5'-phosphate + H(+) = UMP + CO2. It functions in the pathway pyrimidine metabolism; UMP biosynthesis via de novo pathway; UMP from orotate: step 2/2. Catalyzes the decarboxylation of orotidine 5'-monophosphate (OMP) to uridine 5'-monophosphate (UMP). The chain is Orotidine 5'-phosphate decarboxylase from Cereibacter sphaeroides (strain ATCC 17023 / DSM 158 / JCM 6121 / CCUG 31486 / LMG 2827 / NBRC 12203 / NCIMB 8253 / ATH 2.4.1.) (Rhodobacter sphaeroides).